We begin with the raw amino-acid sequence, 500 residues long: L-arabinose isomerase (500 aa).

Glu-306, Glu-333, His-350, and His-450 together coordinate Mn(2+).

Belongs to the arabinose isomerase family. As to quaternary structure, homohexamer. Mn(2+) is required as a cofactor.

It catalyses the reaction beta-L-arabinopyranose = L-ribulose. It functions in the pathway carbohydrate degradation; L-arabinose degradation via L-ribulose; D-xylulose 5-phosphate from L-arabinose (bacterial route): step 1/3. Its function is as follows. Catalyzes the conversion of L-arabinose to L-ribulose. The polypeptide is L-arabinose isomerase (Yersinia pseudotuberculosis serotype I (strain IP32953)).